A 409-amino-acid chain; its full sequence is MKQLVERFLSYVSIDTQSNPSAPQCPSTEKQLNLANQLVIELKELKLADVSVDKNGYVMARLPSNVDYDVPAIGFVAHMDTAPDASGENVKPQIIKDYQGETITLGTSGEELNPTQFPDLKNLIGHDLITTDGTTLLGADNKAGIAEILTAIAILQANPEIPHGDICIGFTPDEEIGRGANLFDVEKFNAKWAYTIDGGPVGELEYENFNATSADVICHGVNVHPGTAKGKMINSMNIAAQFQLMMPTDETPEGTEGYEGFYHLKSMESGVAKTELGYIVRDFSREGMAERKAFMQQKVDELNEKLEKGRVELILTDSYFNMREMVEPHPHVIELAKQAMTACDVQPDIKPIRGGTDGARLSFMGLPCPNIFTGGYNFHGIHEFITINGMKQAVDVIVKIAELNALNNK.

H78 provides a ligand contact to Zn(2+). The active site involves D80. D140 is a Zn(2+) binding site. E174 serves as the catalytic Proton acceptor. Zn(2+) is bound by residues E175, D197, and H379.

The protein belongs to the peptidase M20B family. It depends on Zn(2+) as a cofactor.

It is found in the cytoplasm. The enzyme catalyses Release of the N-terminal residue from a tripeptide.. Its function is as follows. Cleaves the N-terminal amino acid of tripeptides. The sequence is that of Peptidase T from Aliivibrio salmonicida (strain LFI1238) (Vibrio salmonicida (strain LFI1238)).